A 68-amino-acid chain; its full sequence is Large ribosomal subunit protein uL29 (68 aa).

Belongs to the universal ribosomal protein uL29 family.

The chain is Large ribosomal subunit protein uL29 from Prochlorococcus marinus (strain SARG / CCMP1375 / SS120).